The following is a 504-amino-acid chain: ATP synthase subunit alpha, chloroplastic (504 aa).

Residue G170–T177 coordinates ATP.

It belongs to the ATPase alpha/beta chains family. In terms of assembly, F-type ATPases have 2 components, CF(1) - the catalytic core - and CF(0) - the membrane proton channel. CF(1) has five subunits: alpha(3), beta(3), gamma(1), delta(1), epsilon(1). CF(0) has four main subunits: a, b, b' and c.

It is found in the plastid. Its subcellular location is the chloroplast thylakoid membrane. It catalyses the reaction ATP + H2O + 4 H(+)(in) = ADP + phosphate + 5 H(+)(out). In terms of biological role, produces ATP from ADP in the presence of a proton gradient across the membrane. The alpha chain is a regulatory subunit. The sequence is that of ATP synthase subunit alpha, chloroplastic from Hordeum vulgare (Barley).